The primary structure comprises 719 residues: Serine/threonine-protein kinase CBK1 (719 aa).

Disordered stretches follow at residues 1-75 (MFGQ…GAGF) and 100-219 (MQQQ…QTSG). The segment covering 24–38 (QFSSAYMEQQGSHQS) has biased composition (polar residues). Residues 40–63 (QEHLAYEQLQLQQQQQQQQQHAAA) show a composition bias toward low complexity. Composition is skewed to polar residues over residues 112-130 (ATSIYSQNNNSFTNVNDTT), 139-157 (GHYSNSSDYSGQQPASSAY), and 181-219 (GDQTLVGNQSSQGAMLSRQSLQCSSVPQSPNGGQRQTSG). The region spanning 310 to 631 (FHTVKVIGKG…ANEIKNHPFF (322 aa)) is the Protein kinase domain. ATP is bound by residues 316-324 (IGKGAFGEV) and K339. D433 functions as the Proton acceptor in the catalytic mechanism. Residues 632 to 717 (RGVDWETIRQ…SRFDYLTRKN (86 aa)) enclose the AGC-kinase C-terminal domain.

This sequence belongs to the protein kinase superfamily. STE Ser/Thr protein kinase family. COT1 subfamily.

The enzyme catalyses L-seryl-[protein] + ATP = O-phospho-L-seryl-[protein] + ADP + H(+). It catalyses the reaction L-threonyl-[protein] + ATP = O-phospho-L-threonyl-[protein] + ADP + H(+). Functionally, protein kinase that seems to play a role in the regulation of cell morphogenesis and proliferation. In Eremothecium gossypii (strain ATCC 10895 / CBS 109.51 / FGSC 9923 / NRRL Y-1056) (Yeast), this protein is Serine/threonine-protein kinase CBK1 (CBK1).